The primary structure comprises 1124 residues: DNA-directed RNA polymerase subunit Rpo2 (1124 aa).

Positions 1061, 1064, 1079, and 1082 each coordinate Zn(2+).

The protein belongs to the RNA polymerase beta chain family. As to quaternary structure, part of the 13-subunit RNA polymerase complex. Zn(2+) serves as cofactor.

It is found in the cytoplasm. It catalyses the reaction RNA(n) + a ribonucleoside 5'-triphosphate = RNA(n+1) + diphosphate. DNA-dependent RNA polymerase (RNAP) catalyzes the transcription of DNA into RNA using the four ribonucleoside triphosphates as substrates. This subunit is involved in DNA promoter recognition. This Saccharolobus solfataricus (strain ATCC 35092 / DSM 1617 / JCM 11322 / P2) (Sulfolobus solfataricus) protein is DNA-directed RNA polymerase subunit Rpo2.